The sequence spans 640 residues: Putative solute carrier organic anion transporter family member 1B7 (640 aa).

Topologically, residues 1-16 (MKISTTQIERRFEISS) are extracellular. A helical membrane pass occupies residues 17–37 (SLVGLIDGSFEIGNLFVIVFV). Residues 38–49 (SYFGSKLHRPKL) are Cytoplasmic-facing. A helical transmembrane segment spans residues 50–70 (IGIGCFLMGTGSILMALPHFF). Residues 71–123 (MGYYRYSKETNIDPSENSTSNLPNCLINQMLSLNRTPSEIIERGCVKESGSHM) are Extracellular-facing. The chain crosses the membrane as a helical span at residues 124 to 144 (WIYVFMGNMLRGIGETPIVPL). Over 145–159 (GISYIDDFAKEGHSS) the chain is Cytoplasmic. A helical membrane pass occupies residues 160–180 (LYLGTVNVMGMTGLVFAFMLG). At 181–211 (SLFAKMYVDIGYVDLSTIRITPKDSRWVGAW) the chain is on the extracellular side. Residues 212–232 (WLGFLVSGIVSIISSIPFFFL) form a helical membrane-spanning segment. The Cytoplasmic segment spans residues 233-292 (PLNPNKPQKERKVSLFLHVLKTNDKRNQIANLTNRRKYITKNVTGFFQSLKSILTNPLYV). A Phosphoserine modification is found at Ser246. Residues 293-313 (IFVIFTLLHMSSYIASLTYII) traverse the membrane as a helical segment. The Extracellular segment spans residues 314–329 (KMVEQQYGWSASKTNF). The chain crosses the membrane as a helical span at residues 330 to 350 (LLGVLALPAVAIGMFSGGYII). Over 351–362 (KKFKLSLVGLAK) the chain is Cytoplasmic. Residues 363 to 383 (LAFCSATVHLLSQVLYFFLIC) traverse the membrane as a helical segment. The Extracellular portion of the chain corresponds to 384–492 (ESKSVAGLTL…CTRKSYVYFV (109 aa)). Residues 406-461 (DVPLSYCNSECNCDESQWEPVCGNNGITYLSPCLAGCKSSSGNKEPIVFYNCSCVE) enclose the Kazal-like domain. Disulfide bonds link Cys412-Cys442, Cys418-Cys438, and Cys427-Cys459. A helical transmembrane segment spans residues 493 to 513 (IQVLDAFLCAVGLTSYSVLVI). Over 514–521 (RIVQPELK) the chain is Cytoplasmic. The chain crosses the membrane as a helical span at residues 522-542 (ALAIGFHSMIMRSLGGILVPI). Residues 543–577 (YFGALIDTTCMKWSTNSCGARGACRIYNSTYLGRA) are Extracellular-facing. Residues 578–598 (FFGLKVALIFPVLVLLTVFIF) form a helical membrane-spanning segment. Residues 599–640 (VVRKKSHGKDTKVLENERQVMDEANLEFLNDSEHFVPSAEEQ) lie on the Cytoplasmic side of the membrane. Phosphoserine is present on Ser636.

Belongs to the organo anion transporter (TC 2.A.60) family.

The protein localises to the cell membrane. This chain is Putative solute carrier organic anion transporter family member 1B7 (SLCO1B7), found in Homo sapiens (Human).